An 86-amino-acid polypeptide reads, in one-letter code: Cell division topological specificity factor (86 aa).

Belongs to the MinE family.

Its function is as follows. Prevents the cell division inhibition by proteins MinC and MinD at internal division sites while permitting inhibition at polar sites. This ensures cell division at the proper site by restricting the formation of a division septum at the midpoint of the long axis of the cell. The chain is Cell division topological specificity factor from Polaromonas sp. (strain JS666 / ATCC BAA-500).